A 222-amino-acid polypeptide reads, in one-letter code: Flagellar L-ring protein (222 aa).

A signal peptide spans 1–21; the sequence is MQTFLYPRTWLILGLLLLGSG. Cys22 is lipidated: N-palmitoyl cysteine. A lipid anchor (S-diacylglycerol cysteine) is attached at Cys22.

Belongs to the FlgH family. In terms of assembly, the basal body constitutes a major portion of the flagellar organelle and consists of four rings (L,P,S, and M) mounted on a central rod.

The protein resides in the cell outer membrane. Its subcellular location is the bacterial flagellum basal body. Functionally, assembles around the rod to form the L-ring and probably protects the motor/basal body from shearing forces during rotation. The polypeptide is Flagellar L-ring protein (Methylobacillus flagellatus (strain ATCC 51484 / DSM 6875 / VKM B-1610 / KT)).